The primary structure comprises 137 residues: Peptide methionine sulfoxide reductase MsrB (137 aa).

The region spanning 7–129 is the MsrB domain; the sequence is AEELKKNLSE…NSASLRFTDG (123 aa). Zn(2+) contacts are provided by cysteine 46, cysteine 49, cysteine 95, and cysteine 98. Cysteine 118 (nucleophile) is an active-site residue.

The protein belongs to the MsrB Met sulfoxide reductase family. It depends on Zn(2+) as a cofactor.

The enzyme catalyses L-methionyl-[protein] + [thioredoxin]-disulfide + H2O = L-methionyl-(R)-S-oxide-[protein] + [thioredoxin]-dithiol. The polypeptide is Peptide methionine sulfoxide reductase MsrB (Escherichia coli O45:K1 (strain S88 / ExPEC)).